Reading from the N-terminus, the 249-residue chain is Enolase-phosphatase E1 (249 aa).

The Mg(2+) site is built by D15 and E17. Substrate-binding positions include 146–147 and K180; that span reads SS. D205 is a Mg(2+) binding site.

It belongs to the HAD-like hydrolase superfamily. MasA/MtnC family. As to quaternary structure, monomer. It depends on Mg(2+) as a cofactor.

The protein resides in the cytoplasm. The protein localises to the nucleus. It catalyses the reaction 5-methylsulfanyl-2,3-dioxopentyl phosphate + H2O = 1,2-dihydroxy-5-(methylsulfanyl)pent-1-en-3-one + phosphate. Its pathway is amino-acid biosynthesis; L-methionine biosynthesis via salvage pathway; L-methionine from S-methyl-5-thio-alpha-D-ribose 1-phosphate: step 3/6. The protein operates within amino-acid biosynthesis; L-methionine biosynthesis via salvage pathway; L-methionine from S-methyl-5-thio-alpha-D-ribose 1-phosphate: step 4/6. Its function is as follows. Bifunctional enzyme that catalyzes the enolization of 2,3-diketo-5-methylthiopentyl-1-phosphate (DK-MTP-1-P) into the intermediate 2-hydroxy-3-keto-5-methylthiopentenyl-1-phosphate (HK-MTPenyl-1-P), which is then dephosphorylated to form the acireductone 1,2-dihydroxy-3-keto-5-methylthiopentene (DHK-MTPene). The chain is Enolase-phosphatase E1 from Caenorhabditis briggsae.